Consider the following 285-residue polypeptide: Bifunctional protein FolD (285 aa).

NADP(+) contacts are provided by residues 164–166, S193, and I234; that span reads GRS.

It belongs to the tetrahydrofolate dehydrogenase/cyclohydrolase family. As to quaternary structure, homodimer.

It carries out the reaction (6R)-5,10-methylene-5,6,7,8-tetrahydrofolate + NADP(+) = (6R)-5,10-methenyltetrahydrofolate + NADPH. The enzyme catalyses (6R)-5,10-methenyltetrahydrofolate + H2O = (6R)-10-formyltetrahydrofolate + H(+). The protein operates within one-carbon metabolism; tetrahydrofolate interconversion. In terms of biological role, catalyzes the oxidation of 5,10-methylenetetrahydrofolate to 5,10-methenyltetrahydrofolate and then the hydrolysis of 5,10-methenyltetrahydrofolate to 10-formyltetrahydrofolate. The protein is Bifunctional protein FolD of Desulfovibrio desulfuricans (strain ATCC 27774 / DSM 6949 / MB).